The following is a 151-amino-acid chain: MESWLFLALVLLIAIFGHNSSLIIATVIVMVLKLIPYTAKWLPLIQHKGINWGVTVISVAILIPIATGQIGFNDLWAAFKTPAGWIAVGMGIAVAILSKYGVNQLAAVPQVTVALVLGTIIGVVAFKGIAAGPVIASGMTYCIVTLLNLHF.

A run of 4 helical transmembrane segments spans residues 4–24, 52–72, 77–97, and 115–135; these read WLFL…SLII, WGVT…QIGF, AAFK…VAIL, and LVLG…GPVI.

This sequence belongs to the UPF0756 family.

Its subcellular location is the cell membrane. The polypeptide is UPF0756 membrane protein Lreu_0946 (Limosilactobacillus reuteri (strain DSM 20016) (Lactobacillus reuteri)).